The sequence spans 441 residues: pH-response regulator protein palC (441 aa).

The region spanning 3 to 352 is the BRO1 domain; sequence ISYTGQLPTT…GAAYAAILQL (350 aa). Disordered stretches follow at residues 278 to 304 and 414 to 441; these read RKDD…TSSG and KWTP…GSYY.

This sequence belongs to the palC family.

Functionally, required for the proteolytic cleavage of the transcription factor RIM101 in response to alkaline ambient pH. The polypeptide is pH-response regulator protein palC (Yarrowia lipolytica (strain CLIB 122 / E 150) (Yeast)).